A 392-amino-acid polypeptide reads, in one-letter code: Aspartate aminotransferase (392 aa).

3 residues coordinate L-aspartate: Gly40, Trp126, and Asn176. Residue Lys239 is modified to N6-(pyridoxal phosphate)lysine.

Belongs to the class-I pyridoxal-phosphate-dependent aminotransferase family. As to quaternary structure, homodimer. Pyridoxal 5'-phosphate serves as cofactor.

It is found in the cytoplasm. It catalyses the reaction L-aspartate + 2-oxoglutarate = oxaloacetate + L-glutamate. The sequence is that of Aspartate aminotransferase from Bacillus sp. (strain YM-2).